A 183-amino-acid polypeptide reads, in one-letter code: Glutathione-regulated potassium-efflux system ancillary protein KefG (183 aa).

The protein belongs to the NAD(P)H dehydrogenase (quinone) family. KefG subfamily. Interacts with KefB.

Its subcellular location is the cell inner membrane. The catalysed reaction is a quinone + NADH + H(+) = a quinol + NAD(+). It carries out the reaction a quinone + NADPH + H(+) = a quinol + NADP(+). In terms of biological role, regulatory subunit of a potassium efflux system that confers protection against electrophiles. Required for full activity of KefB. This is Glutathione-regulated potassium-efflux system ancillary protein KefG from Pectobacterium atrosepticum (strain SCRI 1043 / ATCC BAA-672) (Erwinia carotovora subsp. atroseptica).